The following is a 466-amino-acid chain: Phosphomethylpyrimidine synthase (466 aa).

Substrate-binding positions include Asn-80, Met-109, Tyr-139, His-175, 195–197 (SRG), 236–239 (DSLR), and Glu-275. His-279 lines the Zn(2+) pocket. Residue Tyr-302 participates in substrate binding. A Zn(2+)-binding site is contributed by His-343. Cys-423, Cys-426, and Cys-431 together coordinate [4Fe-4S] cluster.

Belongs to the ThiC family. The cofactor is [4Fe-4S] cluster.

It catalyses the reaction 5-amino-1-(5-phospho-beta-D-ribosyl)imidazole + S-adenosyl-L-methionine = 4-amino-2-methyl-5-(phosphooxymethyl)pyrimidine + CO + 5'-deoxyadenosine + formate + L-methionine + 3 H(+). It participates in cofactor biosynthesis; thiamine diphosphate biosynthesis. Catalyzes the synthesis of the hydroxymethylpyrimidine phosphate (HMP-P) moiety of thiamine from aminoimidazole ribotide (AIR) in a radical S-adenosyl-L-methionine (SAM)-dependent reaction. This is Phosphomethylpyrimidine synthase from Synechococcus sp. (strain CC9902).